The following is a 209-amino-acid chain: Uracil phosphoribosyltransferase (209 aa).

Residues arginine 79, arginine 104, and 131 to 139 each bind 5-phospho-alpha-D-ribose 1-diphosphate; that span reads DPMLATGVS. Residues isoleucine 194 and 199-201 each bind uracil; that span reads GDA. Aspartate 200 is a 5-phospho-alpha-D-ribose 1-diphosphate binding site.

It belongs to the UPRTase family. Requires Mg(2+) as cofactor.

It carries out the reaction UMP + diphosphate = 5-phospho-alpha-D-ribose 1-diphosphate + uracil. The protein operates within pyrimidine metabolism; UMP biosynthesis via salvage pathway; UMP from uracil: step 1/1. Allosterically activated by GTP. Functionally, catalyzes the conversion of uracil and 5-phospho-alpha-D-ribose 1-diphosphate (PRPP) to UMP and diphosphate. The polypeptide is Uracil phosphoribosyltransferase (Thermotoga neapolitana (strain ATCC 49049 / DSM 4359 / NBRC 107923 / NS-E)).